The sequence spans 97 residues: Protein SENESCENCE-ASSOCIATED GENE 21, mitochondrial (97 aa).

The transit peptide at 1 to 46 (MARSISNVKIVSAFVSRELSNAIFRRGYAATAAQGSVSSGGRSGAV) directs the protein to the mitochondrion.

Belongs to the LEA type 3 family. In terms of tissue distribution, expressed in roots, stems leaves and flowers, but not in seeds. In short days, observed in cotyledons and roots but absent from rosette leaves.

The protein resides in the mitochondrion. Its function is as follows. Mediates tolerance to oxidative stresses (e.g. hydrogen peroxide H(2)O(2), diamide, menadione and tert-butyl hydroperoxide) by minimizing the negative effects of oxidation and monitoring photosynthesis during stress. Promotes root development. Prevents premature aging (e.g. senescence and flowering). Involved in resistance against compatible pathogens such as Botrytis cinerea and Pseudomonas syringae pv. tomato. The protein is Protein SENESCENCE-ASSOCIATED GENE 21, mitochondrial of Arabidopsis thaliana (Mouse-ear cress).